The chain runs to 542 residues: uncharacterized protein (542 aa).

A run of 5 helical transmembrane segments spans residues 4–23 (ILRD…GYPL), 28–47 (IGGI…AFGA), 57–79 (IVYQ…HGFL), 86–108 (GVIY…LIPH), and 151–173 (PVVG…IYLA). 2 RCK C-terminal domains span residues 186–270 (RTLK…VIGC) and 273–356 (EVQA…LGDS). 6 helical membrane passes run 365 to 384 (IAVL…VPIP), 389 to 408 (ITVR…FLGA), 415 to 437 (LVWV…IFLA), 457 to 479 (WAIL…YVGY), 484 to 506 (IPMG…LGFA), and 519 to 541 (YAMV…IAVL).

The protein belongs to the AAE transporter (TC 2.A.81) family.

It localises to the cell membrane. This is an uncharacterized protein from Symbiobacterium thermophilum (strain DSM 24528 / JCM 14929 / IAM 14863 / T).